The following is a 32-amino-acid chain: Photosystem II reaction center protein T (32 aa).

The helical transmembrane segment at 3–23 threads the bilayer; it reads ALVYTFLLIGTLVVIFFAIFF.

The protein belongs to the PsbT family. As to quaternary structure, PSII is composed of 1 copy each of membrane proteins PsbA, PsbB, PsbC, PsbD, PsbE, PsbF, PsbH, PsbI, PsbJ, PsbK, PsbL, PsbM, PsbT, PsbX, PsbY, PsbZ, Psb30/Ycf12, at least 3 peripheral proteins of the oxygen-evolving complex and a large number of cofactors. It forms dimeric complexes.

Its subcellular location is the plastid. The protein resides in the chloroplast thylakoid membrane. Found at the monomer-monomer interface of the photosystem II (PS II) dimer, plays a role in assembly and dimerization of PSII. PSII is a light-driven water plastoquinone oxidoreductase, using light energy to abstract electrons from H(2)O, generating a proton gradient subsequently used for ATP formation. This chain is Photosystem II reaction center protein T, found in Emiliania huxleyi (Coccolithophore).